A 602-amino-acid polypeptide reads, in one-letter code: uncharacterized protein (602 aa).

Residues N305, N497, and N577 are each glycosylated (N-linked (GlcNAc...) asparagine).

N-glycosylated.

It is found in the vacuole. This is an uncharacterized protein from Saccharomyces cerevisiae (strain ATCC 204508 / S288c) (Baker's yeast).